The chain runs to 256 residues: 5'-nucleotidase SurE (256 aa).

Asp8, Asp9, Ser42, and Asn94 together coordinate a divalent metal cation.

This sequence belongs to the SurE nucleotidase family. The cofactor is a divalent metal cation.

The protein localises to the cytoplasm. The catalysed reaction is a ribonucleoside 5'-phosphate + H2O = a ribonucleoside + phosphate. Nucleotidase that shows phosphatase activity on nucleoside 5'-monophosphates. This Ehrlichia chaffeensis (strain ATCC CRL-10679 / Arkansas) protein is 5'-nucleotidase SurE.